The following is a 129-amino-acid chain: Glycine cleavage system H protein (129 aa).

Residues 24-106 (TYTVGITEHA…YAGGWIFKIK (83 aa)) enclose the Lipoyl-binding domain. Residue K65 is modified to N6-lipoyllysine.

Belongs to the GcvH family. In terms of assembly, the glycine cleavage system is composed of four proteins: P, T, L and H. The cofactor is (R)-lipoate.

In terms of biological role, the glycine cleavage system catalyzes the degradation of glycine. The H protein shuttles the methylamine group of glycine from the P protein to the T protein. In Escherichia coli O139:H28 (strain E24377A / ETEC), this protein is Glycine cleavage system H protein.